The primary structure comprises 236 residues: MARRYWDINLEEMMGAGVHFGHGTRKWNPRMAPYISGKRKGIHITNLTRTARPLSEACDLVFDAASRGKHFLIVGTKDKAADSVASAAIRARCHYVNKKWLGGMSTNWSTTETRLHKFRDLRAEQKMGRFKRLPKRDAAMLKRQLSHLQTYLGGIKYMTGLPDIVIIVDHQEEYTAIRECLTLGIPTICLIDTNCDPDLADIPIPANDDAIASIQLILNKLVLAIREGHYSYLGSH.

It belongs to the universal ribosomal protein uS2 family.

It is found in the plastid. Its subcellular location is the chloroplast. This Amborella trichopoda protein is Small ribosomal subunit protein uS2c (rps2).